The sequence spans 184 residues: Photosystem I assembly protein Ycf4 (184 aa).

The next 2 membrane-spanning stretches (helical) occupy residues 22–42 (FCWA…GTSS) and 57–77 (IIFF…LFIS).

Belongs to the Ycf4 family.

It localises to the plastid. It is found in the chloroplast thylakoid membrane. In terms of biological role, seems to be required for the assembly of the photosystem I complex. The sequence is that of Photosystem I assembly protein Ycf4 from Arabis hirsuta (Hairy rock-cress).